Reading from the N-terminus, the 292-residue chain is Acetyl-coenzyme A carboxylase carboxyl transferase subunit beta (292 aa).

Residues 29 to 292 (LWSKCPECGQ…HGCESRVASS (264 aa)) enclose the CoA carboxyltransferase N-terminal domain. Zn(2+)-binding residues include cysteine 33, cysteine 36, cysteine 52, and cysteine 55. A C4-type zinc finger spans residues 33–55 (CPECGQVVYRKDLLSNASVCGNC).

This sequence belongs to the AccD/PCCB family. Acetyl-CoA carboxylase is a heterohexamer composed of biotin carboxyl carrier protein (AccB), biotin carboxylase (AccC) and two subunits each of ACCase subunit alpha (AccA) and ACCase subunit beta (AccD). The cofactor is Zn(2+).

The protein localises to the cytoplasm. It catalyses the reaction N(6)-carboxybiotinyl-L-lysyl-[protein] + acetyl-CoA = N(6)-biotinyl-L-lysyl-[protein] + malonyl-CoA. The protein operates within lipid metabolism; malonyl-CoA biosynthesis; malonyl-CoA from acetyl-CoA: step 1/1. In terms of biological role, component of the acetyl coenzyme A carboxylase (ACC) complex. Biotin carboxylase (BC) catalyzes the carboxylation of biotin on its carrier protein (BCCP) and then the CO(2) group is transferred by the transcarboxylase to acetyl-CoA to form malonyl-CoA. This Synechococcus sp. (strain CC9311) protein is Acetyl-coenzyme A carboxylase carboxyl transferase subunit beta.